We begin with the raw amino-acid sequence, 149 residues long: Putative pre-16S rRNA nuclease (149 aa).

The protein belongs to the YqgF nuclease family.

The protein resides in the cytoplasm. Its function is as follows. Could be a nuclease involved in processing of the 5'-end of pre-16S rRNA. This chain is Putative pre-16S rRNA nuclease, found in Synechococcus elongatus (strain ATCC 33912 / PCC 7942 / FACHB-805) (Anacystis nidulans R2).